The following is a 235-amino-acid chain: tRNA1(Val) (adenine(37)-N6)-methyltransferase (235 aa).

It belongs to the methyltransferase superfamily. tRNA (adenine-N(6)-)-methyltransferase family.

It is found in the cytoplasm. It catalyses the reaction adenosine(37) in tRNA1(Val) + S-adenosyl-L-methionine = N(6)-methyladenosine(37) in tRNA1(Val) + S-adenosyl-L-homocysteine + H(+). Specifically methylates the adenine in position 37 of tRNA(1)(Val) (anticodon cmo5UAC). The chain is tRNA1(Val) (adenine(37)-N6)-methyltransferase from Glaesserella parasuis serovar 5 (strain SH0165) (Haemophilus parasuis).